The chain runs to 1402 residues: DNA-directed RNA polymerase subunit beta' (1402 aa).

4 residues coordinate Zn(2+): Cys71, Cys73, Cys86, and Cys89. Mg(2+) contacts are provided by Asp462, Asp464, and Asp466. Zn(2+)-binding residues include Cys811, Cys885, Cys892, and Cys895.

This sequence belongs to the RNA polymerase beta' chain family. The RNAP catalytic core consists of 2 alpha, 1 beta, 1 beta' and 1 omega subunit. When a sigma factor is associated with the core the holoenzyme is formed, which can initiate transcription. Requires Mg(2+) as cofactor. Zn(2+) is required as a cofactor.

The catalysed reaction is RNA(n) + a ribonucleoside 5'-triphosphate = RNA(n+1) + diphosphate. Functionally, DNA-dependent RNA polymerase catalyzes the transcription of DNA into RNA using the four ribonucleoside triphosphates as substrates. In Rhizobium johnstonii (strain DSM 114642 / LMG 32736 / 3841) (Rhizobium leguminosarum bv. viciae), this protein is DNA-directed RNA polymerase subunit beta'.